We begin with the raw amino-acid sequence, 490 residues long: GTPase Der (490 aa).

EngA-type G domains are found at residues 3-166 (PVIA…PRDD) and 196-369 (IKIA…KSAV). Residues 9-16 (GRPNVGKS), 56-60 (DTGGI), and 118-121 (NKVD) each bind GTP. The disordered stretch occupies residues 162-189 (FPRDDDEPAEGEEEEVVAEGEEAKRIPG). Acidic residues predominate over residues 164–181 (RDDDEPAEGEEEEVVAEG). GTP is bound by residues 202–209 (GRPNVGKS), 249–253 (DTAGV), and 314–317 (NKWD). One can recognise a KH-like domain in the interval 370 to 454 (TRWPTSRLTQ…PIRIEFKGGE (85 aa)). The segment at 453-490 (GENPYEGNKNTLTDRQVNKKRRLMSHNKKASKKRRDKK) is disordered. A compositionally biased stretch (basic residues) spans 470–490 (NKKRRLMSHNKKASKKRRDKK).

This sequence belongs to the TRAFAC class TrmE-Era-EngA-EngB-Septin-like GTPase superfamily. EngA (Der) GTPase family. In terms of assembly, associates with the 50S ribosomal subunit.

In terms of biological role, GTPase that plays an essential role in the late steps of ribosome biogenesis. This is GTPase Der from Pseudomonas fluorescens (strain Pf0-1).